The following is a 119-amino-acid chain: MVKLAFPRELRLLTPKHFNFVFQQPQRASSPEVTILGRQNELGHPRIGLTIAKKNVKRAHERNRIKRLAREYFRLHQHQLPAMDFVVLVRKGVAELDNHQLTEVLGKLWRRHCRLAQKS.

Belongs to the RnpA family. In terms of assembly, consists of a catalytic RNA component (M1 or rnpB) and a protein subunit.

It carries out the reaction Endonucleolytic cleavage of RNA, removing 5'-extranucleotides from tRNA precursor.. Its function is as follows. RNaseP catalyzes the removal of the 5'-leader sequence from pre-tRNA to produce the mature 5'-terminus. It can also cleave other RNA substrates such as 4.5S RNA. The protein component plays an auxiliary but essential role in vivo by binding to the 5'-leader sequence and broadening the substrate specificity of the ribozyme. The sequence is that of Ribonuclease P protein component from Proteus mirabilis (strain HI4320).